We begin with the raw amino-acid sequence, 494 residues long: Beta-glucosidase 29 (494 aa).

An N-terminal signal peptide occupies residues 1–28 (MAWLGIGMGRQIVPVLVFVAVLCSGVDA). Residue Q49 coordinates a beta-D-glucoside. N103 carries an N-linked (GlcNAc...) asparagine glycan. A beta-D-glucoside is bound by residues H138 and 183 to 184 (NE). E184 serves as the catalytic Proton donor. A disulfide bridge links C203 with C211. Residue N263 is glycosylated (N-linked (GlcNAc...) asparagine). Y327 contributes to the a beta-D-glucoside binding site. The N-linked (GlcNAc...) asparagine glycan is linked to N352. Position 398 (E398) interacts with a beta-D-glucoside. E398 (nucleophile) is an active-site residue. N-linked (GlcNAc...) asparagine glycosylation is present at N406. A beta-D-glucoside is bound by residues W447, 454–455 (EW), and F463.

The protein belongs to the glycosyl hydrolase 1 family.

The enzyme catalyses Hydrolysis of terminal, non-reducing beta-D-glucosyl residues with release of beta-D-glucose.. This is Beta-glucosidase 29 (BGLU29) from Oryza sativa subsp. japonica (Rice).